An 881-amino-acid chain; its full sequence is Putative outer membrane usher protein YfcU (881 aa).

Positions 1–29 (MPDHSLFRLRILPWCIALAMSGSYSSVWA) are cleaved as a signal peptide.

The protein belongs to the fimbrial export usher family.

The protein resides in the cell outer membrane. Its function is as follows. Part of the yfcOPQRSUV fimbrial operon. Could contribute to adhesion to various surfaces in specific environmental niches. Increases adhesion to eukaryotic T24 bladder epithelial cells in the absence of fim genes. Probably involved in the export and assembly of fimbrial subunits across the outer membrane. This Escherichia coli (strain K12) protein is Putative outer membrane usher protein YfcU (yfcU).